We begin with the raw amino-acid sequence, 527 residues long: Methane monooxygenase component A alpha chain (527 aa).

Fe cation contacts are provided by Glu-114, Glu-144, and His-147. Cys-151 is a catalytic residue. Fe cation contacts are provided by Glu-209, Glu-243, and His-246.

It belongs to the TmoA/XamoA family. In terms of assembly, m.capsulatus has two forms of methane monooxygenase, a soluble and a membrane-bound type. The soluble type consists of four components (A to D): protein A, comprising three chains, in an alpha-2, beta-2, gamma-2 configuration, is a nonheme iron protein containing an unusual mu-hydroxo bridge structure at its active site and interacts with both oxygen and methane. It depends on Fe cation as a cofactor.

It catalyses the reaction methane + NADH + O2 + H(+) = methanol + NAD(+) + H2O. The enzyme catalyses methane + NADPH + O2 + H(+) = methanol + NADP(+) + H2O. In terms of biological role, responsible for the initial oxygenation of methane to methanol in methanotrophs. It also catalyzes the monohydroxylation of a variety of unactivated alkenes, alicyclic, aromatic and heterocyclic compounds. This Methylococcus capsulatus (strain ATCC 33009 / NCIMB 11132 / Bath) protein is Methane monooxygenase component A alpha chain (mmoX).